Reading from the N-terminus, the 772-residue chain is Phenylalanine--tRNA ligase beta subunit (772 aa).

Residues 40 to 158 (IKPSTNLVFA…DHYKTPNQIF (119 aa)) form the tRNA-binding domain. In terms of domain architecture, B5 spans 397–468 (SVHNVIKNKI…KKISIQEIKP (72 aa)). D446, D452, E455, and D456 together coordinate Mg(2+). One can recognise an FDX-ACB domain in the interval 691-772 (SMYHDVIRDI…QEVNNYLKQF (82 aa)).

It belongs to the phenylalanyl-tRNA synthetase beta subunit family. Type 1 subfamily. As to quaternary structure, tetramer of two alpha and two beta subunits. Mg(2+) is required as a cofactor.

The protein resides in the cytoplasm. The catalysed reaction is tRNA(Phe) + L-phenylalanine + ATP = L-phenylalanyl-tRNA(Phe) + AMP + diphosphate + H(+). This Ureaplasma parvum serovar 3 (strain ATCC 700970) protein is Phenylalanine--tRNA ligase beta subunit (pheT).